The sequence spans 570 residues: Double-stranded RNA-binding protein Staufen homolog 2 (570 aa).

One can recognise a DRBM 1 domain in the interval 8-75 (TAMCLVNELA…ANKALTESTL (68 aa)). Disordered regions lie at residues 71–94 (TEST…PGSI) and 181–203 (NEPI…DDKD). Over residues 83–94 (PKSNVNNNPGSI) the composition is skewed to polar residues. The region spanning 95 to 181 (TPTVELNGLA…AMKALQALQN (87 aa)) is the DRBM 2 domain. S188 carries the post-translational modification Phosphoserine. Residues 194 to 203 (SGKDVDDDKD) are compositionally biased toward basic and acidic residues. DRBM domains lie at 207 to 274 (SEIS…ELKK) and 307 to 375 (NPIS…QLGY). 2 consecutive short sequence motifs (nuclear localization signal) follow at residues 273–291 (KKLP…FKKR) and 373–412 (LGYK…PKGI). The interval 381 to 570 (LQDQLEKTGE…QDCKKSNSAV (190 aa)) is required for dendritic transport. A disordered region spans residues 387 to 409 (KTGENKGWSGPKPGFPEPTNNTP). Position 395 is a phosphoserine (S395). The residue at position 405 (T405) is a Phosphothreonine. Residues S416, S426, S440, S455, and S492 each carry the phosphoserine modification. Positions 528 to 570 (DGAMNIEKGSLEKQAKHLREKADNNQAPPGSIAQDCKKSNSAV) are disordered. A compositionally biased stretch (basic and acidic residues) spans 536-550 (GSLEKQAKHLREKAD).

Interacts with the exportin XPO5. This requires RNA and RAN bound to GTP. Interacts with microtubules. Isoform 2 and isoform 3 may also interact with ribosomes, and this association is independent of translation. Identified in a mRNP complex, at least composed of DHX9, DDX3X, ELAVL1, HNRNPU, IGF2BP1, ILF3, PABPC1, PCBP2, PTBP2, STAU1, STAU2, SYNCRIP and YBX1. Interacts with TRIM71 (via NHL repeats) in an RNA-dependent manner.

Its subcellular location is the cytoplasm. It localises to the nucleus. The protein localises to the nucleolus. It is found in the endoplasmic reticulum. Functionally, RNA-binding protein required for the microtubule-dependent transport of neuronal RNA from the cell body to the dendrite. As protein synthesis occurs within the dendrite, the localization of specific mRNAs to dendrites may be a prerequisite for neurite outgrowth and plasticity at sites distant from the cell body. The sequence is that of Double-stranded RNA-binding protein Staufen homolog 2 (STAU2) from Homo sapiens (Human).